We begin with the raw amino-acid sequence, 102 residues long: Ferredoxin (102 aa).

4Fe-4S ferredoxin-type domains lie at 45–73 and 74–102; these read VSVN…ELVE and TWIE…EVMK. Cysteine 54, cysteine 57, cysteine 60, cysteine 64, cysteine 83, cysteine 86, cysteine 89, and cysteine 93 together coordinate [4Fe-4S] cluster.

The cofactor is [4Fe-4S] cluster.

The protein operates within membrane lipid metabolism; glycerophospholipid metabolism. In terms of biological role, ferredoxin that is the specific electron donor for the geranylgeranyl reductase GGR involved in the biosynthesis of archaeal membrane lipids. The protein is Ferredoxin of Methanosarcina acetivorans (strain ATCC 35395 / DSM 2834 / JCM 12185 / C2A).